The chain runs to 287 residues: Phosphatidylserine decarboxylase proenzyme (287 aa).

Residues Asp-90, His-147, and Ser-253 each act as charge relay system; for autoendoproteolytic cleavage activity in the active site. The Schiff-base intermediate with substrate; via pyruvic acid; for decarboxylase activity role is filled by Ser-253. Residue Ser-253 is modified to Pyruvic acid (Ser); by autocatalysis.

It belongs to the phosphatidylserine decarboxylase family. PSD-B subfamily. Prokaryotic type I sub-subfamily. In terms of assembly, heterodimer of a large membrane-associated beta subunit and a small pyruvoyl-containing alpha subunit. It depends on pyruvate as a cofactor. In terms of processing, is synthesized initially as an inactive proenzyme. Formation of the active enzyme involves a self-maturation process in which the active site pyruvoyl group is generated from an internal serine residue via an autocatalytic post-translational modification. Two non-identical subunits are generated from the proenzyme in this reaction, and the pyruvate is formed at the N-terminus of the alpha chain, which is derived from the carboxyl end of the proenzyme. The autoendoproteolytic cleavage occurs by a canonical serine protease mechanism, in which the side chain hydroxyl group of the serine supplies its oxygen atom to form the C-terminus of the beta chain, while the remainder of the serine residue undergoes an oxidative deamination to produce ammonia and the pyruvoyl prosthetic group on the alpha chain. During this reaction, the Ser that is part of the protease active site of the proenzyme becomes the pyruvoyl prosthetic group, which constitutes an essential element of the active site of the mature decarboxylase.

The protein localises to the cell membrane. It catalyses the reaction a 1,2-diacyl-sn-glycero-3-phospho-L-serine + H(+) = a 1,2-diacyl-sn-glycero-3-phosphoethanolamine + CO2. It functions in the pathway phospholipid metabolism; phosphatidylethanolamine biosynthesis; phosphatidylethanolamine from CDP-diacylglycerol: step 2/2. In terms of biological role, catalyzes the formation of phosphatidylethanolamine (PtdEtn) from phosphatidylserine (PtdSer). In Aliivibrio fischeri (strain ATCC 700601 / ES114) (Vibrio fischeri), this protein is Phosphatidylserine decarboxylase proenzyme.